The chain runs to 586 residues: Glutamate--tRNA ligase (586 aa).

Residues proline 114–histidine 124 carry the 'HIGH' region motif. Basic and acidic residues-rich tracts occupy residues alanine 431–valine 443 and histidine 459–arginine 468. Positions alanine 431–arginine 468 are disordered.

This sequence belongs to the class-I aminoacyl-tRNA synthetase family. Glutamate--tRNA ligase type 2 subfamily.

The protein resides in the cytoplasm. The catalysed reaction is tRNA(Glu) + L-glutamate + ATP = L-glutamyl-tRNA(Glu) + AMP + diphosphate. Functionally, catalyzes the attachment of glutamate to tRNA(Glu) in a two-step reaction: glutamate is first activated by ATP to form Glu-AMP and then transferred to the acceptor end of tRNA(Glu). The chain is Glutamate--tRNA ligase from Halobacterium salinarum (strain ATCC 29341 / DSM 671 / R1).